An 877-amino-acid polypeptide reads, in one-letter code: Translation initiation factor IF-2 (877 aa).

Positions 66 to 115 (PKKESTAKKTTKKDEVKKEEKKTTTKKESKNPAKAVSEKKDEVKKEEKQP) are enriched in basic and acidic residues. Disordered stretches follow at residues 66–127 (PKKE…LEEK), 187–208 (SDES…SKKE), and 241–290 (ENKP…KESE). A compositionally biased stretch (basic residues) spans 192-201 (KRKKKEKKNH). Positions 245–265 (AQPTNKKQPNILKQSLNNSIN) are enriched in polar residues. Residues 376-543 (QRAPVITIMG…IVLLQADILE (168 aa)) enclose the tr-type G domain. The segment at 385-392 (GHVDHGKT) is G1. A GTP-binding site is contributed by 385 to 392 (GHVDHGKT). The interval 410 to 414 (GITQH) is G2. The tract at residues 431-434 (DTPG) is G3. GTP-binding positions include 431–435 (DTPGH) and 485–488 (NKMD). Positions 485–488 (NKMD) are G4. Positions 521–523 (SAK) are G5.

It belongs to the TRAFAC class translation factor GTPase superfamily. Classic translation factor GTPase family. IF-2 subfamily.

It localises to the cytoplasm. Functionally, one of the essential components for the initiation of protein synthesis. Protects formylmethionyl-tRNA from spontaneous hydrolysis and promotes its binding to the 30S ribosomal subunits. Also involved in the hydrolysis of GTP during the formation of the 70S ribosomal complex. In Campylobacter lari (strain RM2100 / D67 / ATCC BAA-1060), this protein is Translation initiation factor IF-2.